We begin with the raw amino-acid sequence, 502 residues long: Glutamate--tRNA ligase (502 aa).

The 'HIGH' region motif lies at 9–19 (PSPTGFPHVGT). The 'KMSKS' region motif lies at 250–254 (KLSKR). Lys253 provides a ligand contact to ATP.

The protein belongs to the class-I aminoacyl-tRNA synthetase family. Glutamate--tRNA ligase type 1 subfamily. Monomer.

It localises to the cytoplasm. The enzyme catalyses tRNA(Glu) + L-glutamate + ATP = L-glutamyl-tRNA(Glu) + AMP + diphosphate. In terms of biological role, catalyzes the attachment of glutamate to tRNA(Glu) in a two-step reaction: glutamate is first activated by ATP to form Glu-AMP and then transferred to the acceptor end of tRNA(Glu). In Acinetobacter baumannii (strain AYE), this protein is Glutamate--tRNA ligase.